Consider the following 139-residue polypeptide: Large-conductance mechanosensitive channel (139 aa).

2 helical membrane-spanning segments follow: residues 19 to 39 (VAVI…ADVI) and 81 to 101 (GNFL…FMVV).

Belongs to the MscL family. As to quaternary structure, homopentamer.

It localises to the cell inner membrane. Its function is as follows. Channel that opens in response to stretch forces in the membrane lipid bilayer. May participate in the regulation of osmotic pressure changes within the cell. The sequence is that of Large-conductance mechanosensitive channel from Nitrobacter hamburgensis (strain DSM 10229 / NCIMB 13809 / X14).